Reading from the N-terminus, the 336-residue chain is Methionyl-tRNA formyltransferase (336 aa).

110–113 provides a ligand contact to (6S)-5,6,7,8-tetrahydrofolate; the sequence is SLLP.

The protein belongs to the Fmt family.

It catalyses the reaction L-methionyl-tRNA(fMet) + (6R)-10-formyltetrahydrofolate = N-formyl-L-methionyl-tRNA(fMet) + (6S)-5,6,7,8-tetrahydrofolate + H(+). Attaches a formyl group to the free amino group of methionyl-tRNA(fMet). The formyl group appears to play a dual role in the initiator identity of N-formylmethionyl-tRNA by promoting its recognition by IF2 and preventing the misappropriation of this tRNA by the elongation apparatus. The sequence is that of Methionyl-tRNA formyltransferase from Prochlorococcus marinus (strain NATL2A).